The following is a 474-amino-acid chain: A-type ATP synthase subunit B (474 aa).

Belongs to the ATPase alpha/beta chains family. As to quaternary structure, has multiple subunits with at least A(3), B(3), C, D, E, F, H, I and proteolipid K(x).

It is found in the cell membrane. Its function is as follows. Component of the A-type ATP synthase that produces ATP from ADP in the presence of a proton gradient across the membrane. The B chain is a regulatory subunit. The chain is A-type ATP synthase subunit B from Halorubrum lacusprofundi (strain ATCC 49239 / DSM 5036 / JCM 8891 / ACAM 34).